The following is a 634-amino-acid chain: Chaperone protein HtpG (634 aa).

The a; substrate-binding stretch occupies residues 1-342 (MSVETQKETL…SNDLSLNVSR (342 aa)). The interval 343 to 559 (EILQKDPVID…EQDLGLQMRQ (217 aa)) is b. The tract at residues 560–634 (ILEASGQKVP…LNKLLVELSA (75 aa)) is c.

Belongs to the heat shock protein 90 family. Homodimer.

It localises to the cytoplasm. Molecular chaperone. Has ATPase activity. This is Chaperone protein HtpG from Ectopseudomonas mendocina (strain ymp) (Pseudomonas mendocina).